The sequence spans 655 residues: A-type voltage-gated potassium channel KCND3 (655 aa).

Topologically, residues 1–182 are cytoplasmic; the sequence is MAAGVAAWLP…FENPHTSTLA (182 aa). An interaction with KCNIP1 and KCNIP2 region spans residues 6-21; sequence AAWLPFARAAAIGWMP. The segment at 70–78 is interaction with KCNIP1; it reads EKEFFFNED. Zn(2+) is bound by residues histidine 104, cysteine 110, cysteine 131, and cysteine 132. The residue at position 153 (serine 153) is a Phosphoserine. Residues 183-204 traverse the membrane as a helical segment; sequence LVFYYVTGFFIAVSVITNVVET. Residues 205–223 lie on the Extracellular side of the membrane; the sequence is VPCGTVPGSKELPCGERYS. Residues 224-246 form a helical membrane-spanning segment; sequence VAFFCLDTACVMIFTVEYLLRLF. Residues 247–253 are Cytoplasmic-facing; sequence AAPSRYR. The helical transmembrane segment at 254 to 277 threads the bilayer; it reads FIRSVMSIIDVVAIMPYYIGLVMT. The Extracellular segment spans residues 278 to 283; it reads NNEDVS. A helical; Voltage-sensor membrane pass occupies residues 284–306; that stretch reads GAFVTLRVFRVFRIFKFSRHSQG. Residues 307–318 are Cytoplasmic-facing; the sequence is LRILGYTLKSCA. The helical transmembrane segment at 319–343 threads the bilayer; that stretch reads SELGFLLFSLTMAIIIFATVMFYAE. At 344–352 the chain is on the extracellular side; sequence KGSSASKFT. Positions 353-366 form an intramembrane region, helical; the sequence is SIPASFWYTIVTMT. Threonine 367, leucine 368, glycine 369, and tyrosine 370 together coordinate K(+). Positions 367–372 match the Selectivity filter motif; the sequence is TLGYGD. An intramembrane segment occupies 367–374; it reads TLGYGDMV. The helical transmembrane segment at 378 to 400 threads the bilayer; that stretch reads IAGKIFGSICSLSGVLVIALPVP. Topologically, residues 401-655 are cytoplasmic; that stretch reads VIVSNFSRIY…TSNVVKVSAL (255 aa). Residue threonine 459 is modified to Phosphothreonine. The tract at residues 470–487 is interaction with KCNIP1 and KCNIP2; it reads SLIESQHHHLLHCLEKTT. The segment at 472–487 is mediates dendritic targeting; the sequence is IESQHHHLLHCLEKTT. The disordered stretch occupies residues 523–565; the sequence is SSMQNYPSTRSPSLSSHSGLTTTCCSRRSKKTTHLPNSNLPAT. Positions 529-548 are enriched in low complexity; it reads PSTRSPSLSSHSGLTTTCCS. Serine 569 and serine 585 each carry phosphoserine. A disordered region spans residues 615–655; sequence ISIPTPPALTPEGESRPPPASPGPNTNIPSITSNVVKVSAL. Over residues 637 to 655 the composition is skewed to polar residues; the sequence is GPNTNIPSITSNVVKVSAL.

Belongs to the potassium channel family. D (Shal) (TC 1.A.1.2) subfamily. Kv4.3/KCND3 sub-subfamily. As to quaternary structure, homotetramer. Heterotetramer with KCND2. Associates with the regulatory subunit KCNIP3. Associates with the regulatory subunit KCNIP4. Interacts with KCNE1, KCNE2, SCN1B and KCNAB1 and DLG1. Component of heteromultimeric potassium channels. Identified in potassium channel complexes containing KCND1, KCND2, KCND3, KCNIP1, KCNIP2, KCNIP3, KCNIP4, DPP6 and DPP10. Interacts with KCNIP1; each KCNIP1 monomer interacts with two adjacent KCND3 subunits, through both the N-terminal inactivation ball of a KCND3 subunit and a C-terminal helix from the adjacent KCND3 subunit, clamping them together; this interaction stabilizes the tetrameric form and modulates the channel gating kinetics namely channel activation and inactivation kinetics and rate of recovery from inactivation. Interacts with DPP6; this interaction modulates the channel gating kinetics namely channel activation and inactivation kinetics and rate of recovery from inactivation. Interacts with KCNIP2; each KCNIP2 monomer interacts with two adjacent KCND3 subunits, through both the N-terminal inactivation ball of a KCND3 subunit and a C-terminal helix from the adjacent KCND3 subunit, clamping them together; this interaction modulates the channel gating kinetics. Regulated through phosphorylation at Ser-569 by CaMK2D.

Its subcellular location is the cell membrane. It localises to the sarcolemma. The protein localises to the cell projection. It is found in the dendrite. It carries out the reaction K(+)(in) = K(+)(out). Pore-forming (alpha) subunit of voltage-gated A-type potassium channels that mediates transmembrane potassium transport in excitable membranes, in brain and heart. In cardiomyocytes, may generate the transient outward potassium current I(To). In neurons, may conduct the transient subthreshold somatodendritic A-type potassium current (ISA). Kinetics properties are characterized by fast activation at subthreshold membrane potentials, rapid inactivation, and quick recovery from inactivation. Channel properties are modulated by interactions with regulatory subunits. Interaction with the regulatory subunits KCNIP1 or KCNIP2 modulates the channel gating kinetics namely channel activation and inactivation kinetics and rate of recovery from inactivation. Likewise, interaction with DPP6 modulates the channel gating kinetics namely channel activation and inactivation kinetics. The chain is A-type voltage-gated potassium channel KCND3 from Mus musculus (Mouse).